The primary structure comprises 255 residues: uncharacterized protein (255 aa).

Residues 1–28 (MFKLNFKNNYKVLTLLFSLTLSMFVSNA) form the signal peptide. Residues Asn-38, Asn-61, and Asn-83 are each glycosylated (N-linked (GlcNAc...) asparagine).

Its subcellular location is the secreted. This is an uncharacterized protein from Dictyostelium discoideum (Social amoeba).